The sequence spans 431 residues: Glutamate-1-semialdehyde 2,1-aminomutase (431 aa).

An N6-(pyridoxal phosphate)lysine modification is found at Lys-269.

The protein belongs to the class-III pyridoxal-phosphate-dependent aminotransferase family. HemL subfamily. In terms of assembly, homodimer. Pyridoxal 5'-phosphate is required as a cofactor.

The protein localises to the cytoplasm. It catalyses the reaction (S)-4-amino-5-oxopentanoate = 5-aminolevulinate. Its pathway is porphyrin-containing compound metabolism; protoporphyrin-IX biosynthesis; 5-aminolevulinate from L-glutamyl-tRNA(Glu): step 2/2. It participates in porphyrin-containing compound metabolism; chlorophyll biosynthesis. In Chlorobaculum tepidum (strain ATCC 49652 / DSM 12025 / NBRC 103806 / TLS) (Chlorobium tepidum), this protein is Glutamate-1-semialdehyde 2,1-aminomutase.